A 1274-amino-acid chain; its full sequence is Regulator of telomere elongation helicase 1 (1274 aa).

The Helicase ATP-binding domain occupies 7–296 (NGVTVDFPFQ…ARVAQHGELQ (290 aa)). Residue 42 to 49 (SPTGTGKT) participates in ATP binding. Residues cysteine 145, cysteine 163, cysteine 172, and cysteine 207 each coordinate [4Fe-4S] cluster. Residues 151-167 (KKQESNHMQISLCRKKV) carry the Nuclear localization signal motif. Positions 250 to 253 (DEAH) match the DEAH box motif. A Nuclear localization signal motif is present at residues 871 to 877 (QRGGKKK). Disordered stretches follow at residues 982 to 1002 (NSLP…RREL), 1014 to 1038 (RQLD…SKGD), and 1143 to 1198 (ELPC…DDTI). The segment covering 1186–1196 (QRPDQSARSDD) has biased composition (basic and acidic residues).

It belongs to the helicase family. RAD3/XPD subfamily. Interacts with TERF1. Interacts (via PIP-box) with PCNA; the interaction is direct and essential for suppressing telomere fragility. Interacts with MMS19; the interaction mediates the association of RTEL1 with the cytosolic iron-sulfur protein assembly (CIA) complex.

The protein resides in the nucleus. It catalyses the reaction ATP + H2O = ADP + phosphate + H(+). Functionally, a probable ATP-dependent DNA helicase implicated in telomere-length regulation, DNA repair and the maintenance of genomic stability. Acts as an anti-recombinase to counteract toxic recombination and limit crossover during meiosis. Regulates meiotic recombination and crossover homeostasis by physically dissociating strand invasion events and thereby promotes noncrossover repair by meiotic synthesis dependent strand annealing (SDSA) as well as disassembly of D loop recombination intermediates. Also disassembles T loops and prevents telomere fragility by counteracting telomeric G4-DNA structures, which together ensure the dynamics and stability of the telomere. The chain is Regulator of telomere elongation helicase 1 (Rtel1) from Rattus norvegicus (Rat).